The following is a 202-amino-acid chain: Holliday junction branch migration complex subunit RuvA (202 aa).

Residues 1–64 (MIGRLRGTLA…EDAQLLYGFA (64 aa)) form a domain I region. The domain II stretch occupies residues 65–143 (GKRERDFFRE…AWETSPAMFA (79 aa)). A flexible linker region spans residues 144–154 (LVPNQPDGPAP). Residues 154-202 (PVNTAENDAVSALISLGYKPQEASKAISAIKEKGLSSEDMIRRALKGMI) form a domain III region.

This sequence belongs to the RuvA family. In terms of assembly, homotetramer. Forms an RuvA(8)-RuvB(12)-Holliday junction (HJ) complex. HJ DNA is sandwiched between 2 RuvA tetramers; dsDNA enters through RuvA and exits via RuvB. An RuvB hexamer assembles on each DNA strand where it exits the tetramer. Each RuvB hexamer is contacted by two RuvA subunits (via domain III) on 2 adjacent RuvB subunits; this complex drives branch migration. In the full resolvosome a probable DNA-RuvA(4)-RuvB(12)-RuvC(2) complex forms which resolves the HJ.

It is found in the cytoplasm. Functionally, the RuvA-RuvB-RuvC complex processes Holliday junction (HJ) DNA during genetic recombination and DNA repair, while the RuvA-RuvB complex plays an important role in the rescue of blocked DNA replication forks via replication fork reversal (RFR). RuvA specifically binds to HJ cruciform DNA, conferring on it an open structure. The RuvB hexamer acts as an ATP-dependent pump, pulling dsDNA into and through the RuvAB complex. HJ branch migration allows RuvC to scan DNA until it finds its consensus sequence, where it cleaves and resolves the cruciform DNA. The protein is Holliday junction branch migration complex subunit RuvA of Pseudomonas fluorescens (strain Pf0-1).